The following is a 145-amino-acid chain: uncharacterized protein (145 aa).

The next 4 membrane-spanning stretches (helical) occupy residues 1–21, 28–48, 54–74, and 96–116; these read MELF…YFLI, TVLI…MGAL, SMTS…AYVM, and FFLI…IPSA.

This sequence belongs to the DcuC/DcuD transporter (TC 2.A.61) family.

The protein localises to the cell membrane. This is an uncharacterized protein from Haemophilus influenzae (strain ATCC 51907 / DSM 11121 / KW20 / Rd).